The chain runs to 297 residues: PsbP domain-containing protein 5, chloroplastic (297 aa).

The protein belongs to the PsbP family.

The protein resides in the plastid. The protein localises to the chloroplast thylakoid lumen. Functionally, involved in strigolactone biosynthesis. The polypeptide is PsbP domain-containing protein 5, chloroplastic (PPD5) (Arabidopsis thaliana (Mouse-ear cress)).